We begin with the raw amino-acid sequence, 147 residues long: Large ribosomal subunit protein uL15 (147 aa).

Residues 1-12 are compositionally biased toward basic and acidic residues; that stretch reads MTLRLNDLKPAD. The interval 1–61 is disordered; that stretch reads MTLRLNDLKP…GFEGGQTPMQ (61 aa). Gly residues predominate over residues 23 to 33; that stretch reads RGIGSGLGKTA. Residues 34 to 47 show a composition bias toward basic residues; that stretch reads GRGHKGSFARKGGG.

This sequence belongs to the universal ribosomal protein uL15 family. Part of the 50S ribosomal subunit.

Functionally, binds to the 23S rRNA. The sequence is that of Large ribosomal subunit protein uL15 from Xanthomonas oryzae pv. oryzae (strain MAFF 311018).